The chain runs to 394 residues: General receptor for phosphoinositides 1-associated scaffold protein (394 aa).

A disordered region spans residues 1-51 (MTLRRLRKLQQKEEATAAPDLAGRAPDSEAARAAPTPSGPPAAAAPPGAPG). The segment covering 37 to 49 (PSGPPAAAAPPGA) has biased composition (pro residues). A Phosphothreonine modification is found at Thr-76. The residue at position 93 (Ser-93) is a Phosphoserine. A PDZ domain is found at 100–189 (VLTLEKGDNQ…VLRLETLYGT (90 aa)). An interaction with PSCD3 region spans residues 180–257 (VLRLETLYGT…GAGLLPGSLP (78 aa)). Tyr-236 carries the phosphotyrosine modification. Arg-269 carries the post-translational modification Omega-N-methylarginine. Positions 293-318 (EPQALPPPPPPARAPGPGSAETPASV) are disordered. Pro residues predominate over residues 296–306 (ALPPPPPPARA). Position 386 is a phosphoserine (Ser-386).

As to quaternary structure, heteromer. Composed of TAMALIN, CYTH2 and at least one GRM1. Also interacts with CYTH3, GRM2, GRM3 and GRM5. In terms of tissue distribution, expressed in brain.

It is found in the cytoplasm. The protein localises to the perinuclear region. Its subcellular location is the cell membrane. The protein resides in the postsynaptic cell membrane. Functionally, plays a role in intracellular trafficking and contributes to the macromolecular organization of group 1 metabotropic glutamate receptors (mGluRs) at synapses. The sequence is that of General receptor for phosphoinositides 1-associated scaffold protein from Rattus norvegicus (Rat).